A 396-amino-acid polypeptide reads, in one-letter code: Sialyltransferase-like protein 2 (396 aa).

Residues 1–6 lie on the Cytoplasmic side of the membrane; the sequence is MKRRHL. A helical; Signal-anchor for type II membrane protein transmembrane segment spans residues 7–23; the sequence is PPVLVLLLLSILSLSFR. Over 24 to 396 the chain is Lumenal; the sequence is RRLLVLQGPP…FTVPPVRLHR (373 aa). N-linked (GlcNAc...) asparagine glycans are attached at residues Asn-72, Asn-260, and Asn-304.

This sequence belongs to the glycosyltransferase 29 family.

Its subcellular location is the golgi apparatus membrane. Its function is as follows. Does not possess sialyltransferase-like activity in vitro. In Oryza sativa subsp. indica (Rice), this protein is Sialyltransferase-like protein 2.